We begin with the raw amino-acid sequence, 101 residues long: NAD(P)H-quinone oxidoreductase subunit 4L, chloroplastic (101 aa).

3 helical membrane-spanning segments follow: residues isoleucine 2–isoleucine 22, methionine 32–phenylalanine 52, and isoleucine 61–valine 81.

Belongs to the complex I subunit 4L family. NDH is composed of at least 16 different subunits, 5 of which are encoded in the nucleus.

Its subcellular location is the plastid. The protein localises to the chloroplast thylakoid membrane. The catalysed reaction is a plastoquinone + NADH + (n+1) H(+)(in) = a plastoquinol + NAD(+) + n H(+)(out). It catalyses the reaction a plastoquinone + NADPH + (n+1) H(+)(in) = a plastoquinol + NADP(+) + n H(+)(out). Functionally, NDH shuttles electrons from NAD(P)H:plastoquinone, via FMN and iron-sulfur (Fe-S) centers, to quinones in the photosynthetic chain and possibly in a chloroplast respiratory chain. The immediate electron acceptor for the enzyme in this species is believed to be plastoquinone. Couples the redox reaction to proton translocation, and thus conserves the redox energy in a proton gradient. The chain is NAD(P)H-quinone oxidoreductase subunit 4L, chloroplastic from Lepidium virginicum (Virginia pepperweed).